Consider the following 511-residue polypeptide: Serine hydroxymethyltransferase (511 aa).

N6-(pyridoxal phosphate)lysine is present on Lys287.

This sequence belongs to the SHMT family. Homotetramer. The cofactor is pyridoxal 5'-phosphate.

The enzyme catalyses (6R)-5,10-methylene-5,6,7,8-tetrahydrofolate + glycine + H2O = (6S)-5,6,7,8-tetrahydrofolate + L-serine. Its pathway is one-carbon metabolism; tetrahydrofolate interconversion. Its function is as follows. Interconversion of serine and glycine. This chain is Serine hydroxymethyltransferase, found in Caenorhabditis briggsae.